The following is a 705-amino-acid chain: Gamma-adducin (705 aa).

The segment covering 1–10 (MSSDTSQAVI) has biased composition (polar residues). The segment at 1 to 22 (MSSDTSQAVITTPPPPSMPHKE) is disordered. Serine 2 is modified (N-acetylserine). Serine 31, serine 42, serine 64, serine 402, serine 414, serine 423, serine 442, and serine 461 each carry phosphoserine. 4 disordered regions span residues 472-495 (EDPSKVSSGTPIKIEDPNQFVPLN), 535-556 (PSTMRFEDDDQGPPAPPNPFSH), 572-612 (KQQG…EENH), and 658-705 (EITI…KVEA). Lysine 484 is covalently cross-linked (Glycyl lysine isopeptide (Lys-Gly) (interchain with G-Cter in SUMO2)). A phosphoserine mark is found at serine 583, serine 585, serine 590, serine 672, serine 676, serine 678, and serine 680. The span at 590-605 (SVSQIQSQTQSPQSVP) shows a compositional bias: low complexity. Over residues 681–705 (PSKKKKKFRTPSFLKKNKKKEKVEA) the composition is skewed to basic residues. Serine 682 is modified (phosphoserine; by PKC). The interval 683–700 (KKKKKFRTPSFLKKNKKK) is interaction with calmodulin.

Belongs to the aldolase class II family. Adducin subfamily. Heterodimer of an alpha and a gamma subunit. Sumoylated. Post-translationally, proteolytically cleaved by asparagine endopeptidase (AEP) into 2 fragments. Overexpression of the 1-357 fragment induces neuronal apoptosis, and overexpression of either 1-357 or 358-706 fragment increases the degeneration of dendritic spines. Overexpression of the 1-357 fragment impairs neurite outgrowth by downregulating the expression of Rac2, and induces synaptic dysfunction and cognitive impairments in tau P301S transgenic mice, a mouse model for Alzheimer disease (AD). Expressed in kidney, brain, spleen, liver and heart. As to expression, expressed in renal interlobular arteries, afferent/efferent arterioles, parietal glomerular epithelial cells and microvilli of the luminal surface of the proximal tubule (at protein level). Expressed in podocytes (at protein level) Expressed in renal cortex (at protein level). Expressed in primary vascular smooth muscle cells (VSMCs) of the kidney (at protein level). Expressed in tubular cells and glomeruli (at protein level).

The protein localises to the cytoplasm. Its subcellular location is the cytoskeleton. The protein resides in the cell membrane. In terms of biological role, membrane-cytoskeleton-associated protein that promotes the assembly of the spectrin-actin network. Plays a role in actin filament capping. Binds to calmodulin. Involved in myogenic reactivity of the renal afferent arteriole (Af-art), renal interlobular arteries and middle cerebral artery (MCA) to increased perfusion pressure. Involved in regulation of potassium channels in the vascular smooth muscle cells (VSMCs) of the Af-art and MCA ex vivo. Involved in regulation of glomerular capillary pressure, glomerular filtration rate (GFR) and glomerular nephrin expression in response to hypertension. Involved in renal blood flow (RBF) autoregulation. Plays a role in podocyte structure and function. Regulates globular monomer actin (G-actin) and filamentous polymer actin (F-actin) ratios in the primary podocytes affecting actin cytoskeleton organization. Regulates expression of synaptopodin, RhoA, Rac1 and CDC42 in the renal cortex and the primary podocytes. Regulates expression of nephrin in the glomeruli and in the primary podocytes, expression of nephrin and podocinin in the renal cortex, and expression of focal adhesion proteins integrin alpha-3 and integrin beta-1 in the glomeruli. Involved in cell migration and cell adhesion of podocytes, and in podocyte foot process effacement. Regulates expression of profibrotics markers MMP2, MMP9, TGF beta-1, tubular tight junction protein E-cadherin, and mesenchymal markers vimentin and alpha-SMA. Promotes the growth of neurites. The polypeptide is Gamma-adducin (Add3) (Rattus norvegicus (Rat)).